The following is a 116-amino-acid chain: Large ribosomal subunit protein bL19 (116 aa).

This sequence belongs to the bacterial ribosomal protein bL19 family.

Functionally, this protein is located at the 30S-50S ribosomal subunit interface and may play a role in the structure and function of the aminoacyl-tRNA binding site. In Clostridium novyi (strain NT), this protein is Large ribosomal subunit protein bL19.